The chain runs to 713 residues: Putative ERAD-associated E3 ubiquitin-protein ligase component (713 aa).

Residues Met1 to Thr20 form the signal peptide. Residues Asn48 and Asn123 are each glycosylated (N-linked (GlcNAc...) asparagine). Sel1-like repeat units follow at residues Pro83–Tyr124 and Thr125–Ser160. Asn211 is a glycosylation site (N-linked (GlcNAc...) asparagine). Sel1-like repeat units follow at residues Ile212–Asn248, Ser280–His315, Ile490–Pro525, and Ala527–Thr562. Asn314 carries N-linked (GlcNAc...) asparagine glycosylation. Residues Gln621–Met655 are disordered. The span at Val631 to Thr652 shows a compositional bias: polar residues. The chain crosses the membrane as a helical span at residues Gly671–Met691.

The protein belongs to the sel-1 family.

Its subcellular location is the endoplasmic reticulum membrane. In terms of biological role, component of the endoplasmic reticulum quality control (ERQC) system involved in ubiquitin-dependent degradation of missfolded endoplasmic reticulum proteins. The polypeptide is Putative ERAD-associated E3 ubiquitin-protein ligase component (Schizosaccharomyces pombe (strain 972 / ATCC 24843) (Fission yeast)).